The primary structure comprises 196 residues: MSLRIDAVILAGGMARRMGGNDKGLVELLDKPMIEHSIDRIKPQVKEIMINANRNQSRYADLGYPVFSDEDSGYLGPLAGMITAMGQTQADYLLVVPCDCPLLPLDLVERMLTKIQSEGAELAVASDGKREQPVVLLLKPSLRDSMKAFLDGGERKIDFWYAKHHCVVTEFSDQPNAFINVNTPEQKQQLAEAIAK.

GTP contacts are provided by residues 10–12, lysine 23, asparagine 51, aspartate 69, and aspartate 99; that span reads LAG. Aspartate 99 is a binding site for Mg(2+).

It belongs to the MobA family. As to quaternary structure, monomer. It depends on Mg(2+) as a cofactor.

The protein localises to the cytoplasm. The enzyme catalyses Mo-molybdopterin + GTP + H(+) = Mo-molybdopterin guanine dinucleotide + diphosphate. Its function is as follows. Transfers a GMP moiety from GTP to Mo-molybdopterin (Mo-MPT) cofactor (Moco or molybdenum cofactor) to form Mo-molybdopterin guanine dinucleotide (Mo-MGD) cofactor. The sequence is that of Molybdenum cofactor guanylyltransferase from Shewanella woodyi (strain ATCC 51908 / MS32).